Here is a 214-residue protein sequence, read N- to C-terminus: Probable transaldolase (214 aa).

The active-site Schiff-base intermediate with substrate is the lysine 83.

Belongs to the transaldolase family. Type 3B subfamily.

It is found in the cytoplasm. It carries out the reaction D-sedoheptulose 7-phosphate + D-glyceraldehyde 3-phosphate = D-erythrose 4-phosphate + beta-D-fructose 6-phosphate. It participates in carbohydrate degradation; pentose phosphate pathway; D-glyceraldehyde 3-phosphate and beta-D-fructose 6-phosphate from D-ribose 5-phosphate and D-xylulose 5-phosphate (non-oxidative stage): step 2/3. In terms of biological role, transaldolase is important for the balance of metabolites in the pentose-phosphate pathway. The protein is Probable transaldolase of Geobacter sulfurreducens (strain ATCC 51573 / DSM 12127 / PCA).